Consider the following 204-residue polypeptide: B9 domain-containing protein 1 (204 aa).

The C2 B9-type domain occupies 9–127 (FLLMVNGQVE…TIPMFVPEST (119 aa)). A disordered region spans residues 182 to 204 (GYDTGPSDTQGVLGPSPPQSFPQ).

It belongs to the B9D family. Part of the tectonic-like complex (also named B9 complex).

It localises to the cytoplasm. It is found in the cytoskeleton. Its subcellular location is the cilium basal body. The protein localises to the cilium axoneme. Functionally, component of the tectonic-like complex, a complex localized at the transition zone of primary cilia and acting as a barrier that prevents diffusion of transmembrane proteins between the cilia and plasma membranes. Required for ciliogenesis and sonic hedgehog/SHH signaling. In Homo sapiens (Human), this protein is B9 domain-containing protein 1 (B9D1).